The chain runs to 241 residues: Lysoplasmalogenase TMEM86A (241 aa).

The Cytoplasmic portion of the chain corresponds to 1–13 (MVSPVTVVKSEGP). Residues 14–30 (KLVPFFKATCVYFVLWL) traverse the membrane as a helical segment. Residues 31-36 (PSSSPS) lie on the Extracellular side of the membrane. Residues 37–59 (WVSALIKCLPIFCLWLFLLAHGV) traverse the membrane as a helical segment. The Cytoplasmic segment spans residues 60–67 (RFLLAHPS). Residues 68–87 (ASLIFVGLVFSAVGDAFLIW) form a helical membrane-spanning segment. The Extracellular portion of the chain corresponds to 88-96 (QDHGYFEHG). Residues 97–113 (LLMFAVAHILYAAAFGM) traverse the membrane as a helical segment. Residues 114–119 (RPLALR) lie on the Cytoplasmic side of the membrane. Residues 120-136 (TGLVIGVLSGLCYALLY) traverse the membrane as a helical segment. The Extracellular segment spans residues 137-142 (PGLSGA). The helical transmembrane segment at 143 to 159 (FTYLVGVYVALISFMGW) threads the bilayer. Residues 160–176 (RAMAGLRLVGAAWRWTE) lie on the Cytoplasmic side of the membrane. The chain crosses the membrane as a helical span at residues 177 to 195 (LAAGGGALLFILSDLTIAL). The Extracellular portion of the chain corresponds to 196–206 (NKFCFPVPYSR). Residues 207 to 225 (ALIMSTYYAAQMLIALSAV) form a helical membrane-spanning segment. Over 226-241 (ESREPVGEDYRLSKAD) the chain is Cytoplasmic.

It belongs to the TMEM86 family. As to expression, highly expressed in the jejunum, white adipose tissue, kidney and macrophages.

The protein localises to the endoplasmic reticulum membrane. The catalysed reaction is a 1-O-(1Z-alkenyl)-sn-glycero-3-phosphocholine + H2O = a 2,3-saturated aldehyde + sn-glycerol 3-phosphocholine. It carries out the reaction a 1-O-(1Z-alkenyl)-sn-glycero-3-phosphoethanolamine + H2O = a 2,3-saturated aldehyde + sn-glycero-3-phosphoethanolamine. Functionally, catalyzes the hydrolysis of the vinyl ether bond of choline or ethanolamine lysoplasmalogens, forming fatty aldehyde and glycerophosphocholine or glycerophosphoethanolamine, respectively and is specific for the sn-2-deacylated (lyso) form of plasmalogen. Plays an important role in lysoplasmalogen metabolism in the adipocyte tissue and macrophages. This is Lysoplasmalogenase TMEM86A (Tmem86a) from Mus musculus (Mouse).